A 192-amino-acid chain; its full sequence is MKNFLAQQGKITLILTALCVLIYLAQQLGFEDDIMYLMHYPAYEEQDSEVWRYISHTLVHLSNLHILFNLSWFFIFGGMIERTFGSVKLLMLYVVASAITGYVQNYVSGPAFFGLSGVVYAVLGYVFIRDKLNHHLFDLPEGFFTMLLVGIALGFISPLFGVEMGNAAHISGLIVGLIWGFIDSKLRKNSLE.

The Cytoplasmic portion of the chain corresponds to methionine 1–lysine 10. Residues isoleucine 11–glutamate 31 form a helical membrane-spanning segment. Residues aspartate 32–threonine 57 lie on the Periplasmic side of the membrane. Residues leucine 58–glycine 78 traverse the membrane as a helical segment. Residues methionine 79–arginine 82 lie on the Cytoplasmic side of the membrane. The helical transmembrane segment at threonine 83 to valine 103 threads the bilayer. Residues glutamine 104 to valine 107 lie on the Periplasmic side of the membrane. Residues serine 108 to isoleucine 128 form a helical membrane-spanning segment. Serine 116 acts as the Nucleophile in catalysis. The Cytoplasmic portion of the chain corresponds to arginine 129–glutamate 141. Residues glycine 142–valine 162 form a helical membrane-spanning segment. Position 163 (glutamate 163) is a topological domain, periplasmic. The chain crosses the membrane as a helical span at residues methionine 164–serine 184. Histidine 169 is a catalytic residue. Residues lysine 185 to glutamate 192 lie on the Cytoplasmic side of the membrane.

This sequence belongs to the peptidase S54 family.

It localises to the cell inner membrane. It catalyses the reaction Cleaves type-1 transmembrane domains using a catalytic dyad composed of serine and histidine that are contributed by different transmembrane domains.. Its function is as follows. Rhomboid-type serine protease that catalyzes intramembrane proteolysis. The sequence is that of Rhomboid protease GlpG (glpG) from Haemophilus influenzae (strain ATCC 51907 / DSM 11121 / KW20 / Rd).